An 871-amino-acid chain; its full sequence is Probable receptor-like protein kinase At2g21480 (871 aa).

The N-terminal stretch at 1 to 39 (MEIRKKPNIPMCLVLDSSSRPFMTLLFTILLFLTGLASA) is a signal peptide. At 40-439 (VGAVGGSPTA…GQRASMGKQG (400 aa)) the chain is on the extracellular side. N169, N182, N253, N316, and N381 each carry an N-linked (GlcNAc...) asparagine glycan. The chain crosses the membrane as a helical span at residues 440–460 (MVATAGFVMMFGAFVGLGAMV). Topologically, residues 461–871 (YKWKKRPQDW…FTQFASLNGR (411 aa)) are cytoplasmic. The Protein kinase domain occupies 525 to 797 (FDASEIIGVG…GDVLWNLEYA (273 aa)). ATP contacts are provided by residues 531-539 (IGVGGFGNV) and K553. Catalysis depends on D649, which acts as the Proton acceptor. The segment at 808–871 (KAEAEEVETP…FTQFASLNGR (64 aa)) is disordered. Residues 817-839 (PKPVAVPAAAPTSPAATTAAASE) show a composition bias toward low complexity. The segment covering 854–871 (DQHSGTTMFTQFASLNGR) has biased composition (polar residues).

This sequence belongs to the protein kinase superfamily. Ser/Thr protein kinase family.

It localises to the membrane. This chain is Probable receptor-like protein kinase At2g21480, found in Arabidopsis thaliana (Mouse-ear cress).